The chain runs to 475 residues: FAD-dependent monooxygenase penE (475 aa).

FAD-binding residues include Glu-35, Gly-49, and Arg-108. Tyr-216 is an active-site residue. Residues Asp-308 and Ala-321 each coordinate FAD. A glycan (N-linked (GlcNAc...) asparagine) is linked at Asn-437. The helical transmembrane segment at 446-466 (WGSIWLSPVILCLFCMLFLWP) threads the bilayer.

The protein belongs to the paxM FAD-dependent monooxygenase family. Requires FAD as cofactor.

It localises to the membrane. The enzyme catalyses [(1'E)-3'-hydroxy-3',7'-dimethylocta-1',6'-dien-1'-yl]-quinolinone B + NADPH + O2 + H(+) = [(1'E)-5'-(3',3'-dimethyloxiran-2'-yl)-3'-hydroxy-3'-methylpent-1'-en-1'-yl]-quinolinone B + NADP(+) + H2O. Its pathway is secondary metabolite biosynthesis. The protein operates within alkaloid biosynthesis. It functions in the pathway mycotoxin biosynthesis. In terms of biological role, FAD-dependent monooxygenase; part of the gene cluster that mediates the biosynthesis of penigequinolones, potent insecticidal alkaloids that contain a highly modified 10-carbon prenyl group. The first stage is catalyzed by the nonribosomal peptide synthetase penN that condenses anthranilic acid and O-methyl-L-tyrosine to produce 4'-methoxycyclopeptin. 4'-methoxycyclopeptin is then converted to 4'-methoxydehydrocyclopeptin by the ketoglutarate-dependent dioxygenase penM through dehydrogenation to form a double bond between C-alpha and C-beta of the O-methyltyrosine side chain. PenM also converts its first product methoxydehydrocyclopeptin to 4'-methoxycyclopenin. The following conversion of 4'methoxycyclopenin into 4'-methoxyviridicatin is catalyzed by the cyclopenase penL. 4'-methoxyviridicatin is the precursor of quinolone natural products, and is further converted to quinolinone B. The prenyltransferase penI then catalyzes the canonical Friedel-Crafts alkylation of quinolinone B with dimethylallyl cation to yield dimethylallyl quinolone, which is subjected to FAD-dependent dehydrogenation by the FAD-linked oxidoreductase penH to yield conjugated aryl diene. The delta(3') double bond then serves as the site of the second alkylation with DMAPP catalyzed by the prenyltransferase penG to yield a carbenium ion intermediate, which can be attacked by H(2)O to yield a styrenyl quinolone containing a C3'-hydroxyprenyl chain, or undergo cyclization to yield yaequinolones J1 and J2. The conversion of the styrenyl quinolone into the tetrahydrofuran-containing yaequinolone C is performed by the FAD-dependent monooxygenase penE and involves epoxidation of the terminal C7'-C8' olefin, followed by epoxide ring opening initiated by the C3' hydroxyl group. The predicted cysteine hydrolase penJ acts as an epoxide hydrolase that enhances the rate of the 5-exo-tet cyclization step, increasing the yield of yaequinolone C. PenF catalyzes the cationic rearrangement of the epoxide formed by penE (before ring opening to produce yaequinolone C) into yaequinolone D. Finally, the short-chain dehydrogenase/reductase (SDR)-like reductase penD, catalyzes both the dehydration of yaequinolone D and the reduction of the resulting oxonium to yield penigequinolone. The polypeptide is FAD-dependent monooxygenase penE (Penicillium thymicola).